We begin with the raw amino-acid sequence, 387 residues long: MYCIGLISGTSVDGIDACLVDISGSGLDLKVDLLRGETYPYPDALRQEILALCAGTPVSPEAIAFLDDSIAKEFAQAAQQIQQSLPPADLIGSHGQTIFHRPPNPEKAFSLGYSWQLGRGEAIANLTGITTVSNFRAADIAAGGQGAPLVSKIDVCLLSHQNEHRCVQNLGGIGNVTYLPPRSQTNWQEKICGWDTGPANVLVDLAVQKFTQGEKTYDQGGQWAAQGKPRQELVDQWLQEPFFEQYPPKSTGRELFGALYLDNCWIEAQRHGLNETDFLTTLTEFTARSVVTEYQRFLPQLPDRLLLCGGGAHNLYLRERLQYHLGSNTKIQRTDDVGLNSDFKEAIAFAVLAYWRFQEQFPGNVPLVTGASQDCLLGDIHLVPVGS.

9–16 (GTSVDGID) contacts ATP.

This sequence belongs to the anhydro-N-acetylmuramic acid kinase family.

The catalysed reaction is 1,6-anhydro-N-acetyl-beta-muramate + ATP + H2O = N-acetyl-D-muramate 6-phosphate + ADP + H(+). Its pathway is amino-sugar metabolism; 1,6-anhydro-N-acetylmuramate degradation. The protein operates within cell wall biogenesis; peptidoglycan recycling. In terms of biological role, catalyzes the specific phosphorylation of 1,6-anhydro-N-acetylmuramic acid (anhMurNAc) with the simultaneous cleavage of the 1,6-anhydro ring, generating MurNAc-6-P. Is required for the utilization of anhMurNAc either imported from the medium or derived from its own cell wall murein, and thus plays a role in cell wall recycling. This chain is Anhydro-N-acetylmuramic acid kinase, found in Synechocystis sp. (strain ATCC 27184 / PCC 6803 / Kazusa).